Reading from the N-terminus, the 112-residue chain is MSVLLIAKTLGLFFITAIAEIIGCYLPYLWLKKDGSAWLLIPAAISLAVFAWLLTLHPAESGRVYAAYGGVYVVTALLWLKAVEGASLSTYDAVGAAFTLTGMAIIAVGWNH.

A run of 4 helical transmembrane segments spans residues 10–30 (LGLF…PYLW), 36–56 (SAWL…LLTL), 64–84 (VYAA…KAVE), and 90–110 (TYDA…AVGW).

Belongs to the UPF0060 family.

The protein localises to the cell inner membrane. The polypeptide is UPF0060 membrane protein IL2332 (Idiomarina loihiensis (strain ATCC BAA-735 / DSM 15497 / L2-TR)).